The chain runs to 195 residues: Imidazoleglycerol-phosphate dehydratase (195 aa).

Belongs to the imidazoleglycerol-phosphate dehydratase family.

The protein resides in the cytoplasm. The catalysed reaction is D-erythro-1-(imidazol-4-yl)glycerol 3-phosphate = 3-(imidazol-4-yl)-2-oxopropyl phosphate + H2O. It functions in the pathway amino-acid biosynthesis; L-histidine biosynthesis; L-histidine from 5-phospho-alpha-D-ribose 1-diphosphate: step 6/9. The protein is Imidazoleglycerol-phosphate dehydratase of Alkaliphilus metalliredigens (strain QYMF).